The sequence spans 442 residues: MAGEGDQQDAAHNMGNHLPLLPAESEEEDEMEVEDQDSKEAKKPNIINFDTSLPTSHTYLGADMEEFHGRTLHDDDSCQVIPVLPQVMMILIPGQTLPLQLFHPQEVSMVRNLIQKDRTFAVLAYSNVQEREAQFGTTAEIYAYREEQDFGIEIVKVKAIGRQRFKVLELRTQSDGIQQAKVQILPECVLPSTMSAVQLESLNKCQIFPSKPVSREDQCSYKWWQKYQKRKFHCANLTSWPRWLYSLYDAETLMDRIKKQLREWDENLKDDSLPSNPIDFSYRVAACLPIDDVLRIQLLKIGSAIQRLRCELDIMNKCTSLCCKQCQETEITTKNEIFSLSLCGPMAAYVNPHGYVHETLTVYKACNLNLIGRPSTEHSWFPGYAWTVAQCKICASHIGWKFTATKKDMSPQKFWGLTRSALLPTIPDTEDEISPDKVILCL.

Positions 1–45 are disordered; that stretch reads MAGEGDQQDAAHNMGNHLPLLPAESEEEDEMEVEDQDSKEAKKPN. Positions 24–35 are enriched in acidic residues; sequence ESEEEDEMEVED. A Phosphoserine modification is found at S25. In terms of domain architecture, Lon N-terminal spans 81-319; that stretch reads IPVLPQVMMI…CELDIMNKCT (239 aa). The region spanning 318 to 426 is the CULT domain; it reads CTSLCCKQCQ…LTRSALLPTI (109 aa). Zn(2+) contacts are provided by C323 and C326. (S)-thalidomide-binding residues include H378, W380, and W386. Residues C391 and C394 each coordinate Zn(2+).

Belongs to the CRBN family. As to quaternary structure, interacts with KCNT1. Component of a DCX (DDB1-CUL4-X-box) protein ligase complex, at least composed of CRBN, CUL4A, DDB1 and RBX1. Interacts directly with DDB1. Interacts (in pomalidomide-bound form) with IKZF1 and IKZF3. Interacts with ILF2. Interacts with TRAF6 and ECSIT. In terms of processing, ubiquitinated, ubiquitination is mediated by its own DCX protein ligase complex. In terms of tissue distribution, widely expressed. Highly expressed in brain.

Its subcellular location is the cytoplasm. The protein localises to the nucleus. It localises to the membrane. It participates in protein modification; protein ubiquitination. In terms of biological role, substrate recognition component of a DCX (DDB1-CUL4-X-box) E3 protein ligase complex that mediates the ubiquitination and subsequent proteasomal degradation of target proteins, such as MEIS2, ILF2 or GLUL. Normal degradation of key regulatory proteins is required for normal limb outgrowth and expression of the fibroblast growth factor FGF8. Maintains presynaptic glutamate release and consequently cognitive functions, such as memory and learning, by negatively regulating large-conductance calcium-activated potassium (BK) channels in excitatory neurons. Likely to function by regulating the assembly and neuronal surface expression of BK channels via its interaction with KCNT1. May also be involved in regulating anxiety-like behaviors via a BK channel-independent mechanism. Plays a negative role in TLR4 signaling by interacting with TRAF6 and ECSIT, leading to inhibition of ECSIT ubiquitination, an important step of the signaling. This Homo sapiens (Human) protein is Protein cereblon (CRBN).